We begin with the raw amino-acid sequence, 864 residues long: Alanine--tRNA ligase (864 aa).

4 residues coordinate Zn(2+): histidine 553, histidine 557, cysteine 655, and histidine 659. Positions 828–847 are disordered; the sequence is VGGKGGGRPDMAQAGGKDPS.

Belongs to the class-II aminoacyl-tRNA synthetase family. It depends on Zn(2+) as a cofactor.

The protein localises to the cytoplasm. It catalyses the reaction tRNA(Ala) + L-alanine + ATP = L-alanyl-tRNA(Ala) + AMP + diphosphate. Its function is as follows. Catalyzes the attachment of alanine to tRNA(Ala) in a two-step reaction: alanine is first activated by ATP to form Ala-AMP and then transferred to the acceptor end of tRNA(Ala). Also edits incorrectly charged Ser-tRNA(Ala) and Gly-tRNA(Ala) via its editing domain. In Hydrogenovibrio crunogenus (strain DSM 25203 / XCL-2) (Thiomicrospira crunogena), this protein is Alanine--tRNA ligase.